A 291-amino-acid chain; its full sequence is MQFTFEQIFIAMLLTLFAGFSTAIGSIIAFFSRKDDLRVLSLGLGFSAGVMIYISFMEILPTALKDFKNHYDSHWAELLGLACFFGGILISLLIDKLIPEDVNPHEPKEDLSELKICPLPQKGQNPPKFHPGEKLHQINTKALKRTGIFTALAIAIHNFPEGFATFISSLDNLTLGIAIAIAVAIHNIPEGLAVSLPIYHATGDKKKAFIYSALSGFAEPLGAFVGALILLPFIGDLTLAISFAVIAGIMVFISLDELLPAAKTYDKAHDSLYGLIAGMAIMALSLNLLGQ.

8 helical membrane passes run 8–28 (IFIAMLLTLFAGFSTAIGSII), 39–59 (VLSLGLGFSAGVMIYISFMEI), 74–94 (HWAELLGLACFFGGILISLLI), 147–167 (GIFTALAIAIHNFPEGFATFI), 174–194 (TLGIAIAIAVAIHNIPEGLAV), 209–229 (FIYSALSGFAEPLGAFVGALI), 233–253 (FIGDLTLAISFAVIAGIMVFI), and 271–291 (SLYGLIAGMAIMALSLNLLGQ). Asn158 and Glu161 together coordinate Fe(2+). Residues Glu161 and His186 each coordinate Zn(2+). Fe(2+) is bound by residues Asn187, Glu190, and Glu219. Zn(2+) is bound at residue Glu190.

The protein belongs to the ZIP transporter (TC 2.A.5) family. ZupT subfamily.

The protein localises to the cell inner membrane. It catalyses the reaction Zn(2+)(in) = Zn(2+)(out). Mediates zinc uptake. May also transport other divalent cations. This is Zinc transporter ZupT from Campylobacter jejuni subsp. jejuni serotype O:2 (strain ATCC 700819 / NCTC 11168).